We begin with the raw amino-acid sequence, 524 residues long: Alkaline phosphatase, tissue-nonspecific isozyme (524 aa).

The first 17 residues, 1–17 (MILPFLVLAIGTCLTNS), serve as a signal peptide directing secretion. D60 lines the Mg(2+) pocket. Residues D60 and S110 each contribute to the Zn(2+) site. The active-site Phosphoserine intermediate is the S110. S110 carries the phosphoserine modification. Cysteines 139 and 201 form a disulfide. N-linked (GlcNAc...) asparagine glycosylation is present at N140. Residue T173 coordinates Mg(2+). N230 carries N-linked (GlcNAc...) asparagine glycosylation. E235 lines the Ca(2+) pocket. A glycan (N-linked (GlcNAc...) asparagine) is linked at N271. 2 residues coordinate Ca(2+): F290 and E291. N303 carries N-linked (GlcNAc...) asparagine glycosylation. D306 is a Ca(2+) binding site. E332 provides a ligand contact to Mg(2+). Zn(2+)-binding residues include D337, H341, D378, and H379. The N-linked (GlcNAc...) asparagine glycan is linked to N430. Residue H454 participates in Zn(2+) binding. C489 and C497 are oxidised to a cystine. The GPI-anchor amidated serine moiety is linked to residue S501. A propeptide spans 502-524 (SASSPSPGALLLPLALFPLRTLF) (removed in mature form).

Belongs to the alkaline phosphatase family. Homodimer. Mg(2+) serves as cofactor. Requires Zn(2+) as cofactor. It depends on Ca(2+) as a cofactor. In terms of processing, N-glycosylated.

The protein localises to the cell membrane. It localises to the extracellular vesicle membrane. Its subcellular location is the mitochondrion membrane. It is found in the mitochondrion intermembrane space. The enzyme catalyses a phosphate monoester + H2O = an alcohol + phosphate. It catalyses the reaction diphosphate + H2O = 2 phosphate + H(+). It carries out the reaction pyridoxal 5'-phosphate + H2O = pyridoxal + phosphate. The catalysed reaction is phosphoethanolamine + H2O = ethanolamine + phosphate. The enzyme catalyses N-phosphocreatine + H2O = creatine + phosphate. It catalyses the reaction ATP + H2O = ADP + phosphate + H(+). It carries out the reaction ADP + H2O = AMP + phosphate + H(+). The catalysed reaction is AMP + H2O = adenosine + phosphate. Its activity is regulated as follows. Phosphatase activity is specifically inhibited by 5-((5-chloro-2-methoxyphenyl)sulfonamido)nicotinamide (SBI-425). Alkaline phosphatase that metabolizes various phosphate compounds and plays a key role in skeletal mineralization and adaptive thermogenesis. Has broad substrate specificity and can hydrolyze a considerable variety of compounds: however, only a few substrates, such as diphosphate (inorganic pyrophosphate; PPi), pyridoxal 5'-phosphate (PLP) and N-phosphocreatine are natural substrates. Plays an essential role in skeletal and dental mineralization via its ability to hydrolyze extracellular diphosphate, a potent mineralization inhibitor, to phosphate: it thereby promotes hydroxyapatite crystal formation and increases inorganic phosphate concentration. Acts in a non-redundant manner with PHOSPHO1 in skeletal mineralization: while PHOSPHO1 mediates the initiation of hydroxyapatite crystallization in the matrix vesicles (MVs), ALPL/TNAP catalyzes the spread of hydroxyapatite crystallization in the extracellular matrix. Also promotes dephosphorylation of osteopontin (SSP1), an inhibitor of hydroxyapatite crystallization in its phosphorylated state; it is however unclear whether ALPL/TNAP mediates SSP1 dephosphorylation via a direct or indirect manner. Catalyzes dephosphorylation of PLP to pyridoxal (PL), the transportable form of vitamin B6, in order to provide a sufficient amount of PLP in the brain, an essential cofactor for enzymes catalyzing the synthesis of diverse neurotransmitters. Additionally, also able to mediate ATP degradation in a stepwise manner to adenosine, thereby regulating the availability of ligands for purinergic receptors. Also capable of dephosphorylating microbial products, such as lipopolysaccharides (LPS) as well as other phosphorylated small-molecules, such as poly-inosine:cytosine (poly I:C). Acts as a key regulator of adaptive thermogenesis as part of the futile creatine cycle: localizes to the mitochondria of thermogenic fat cells and acts by mediating hydrolysis of N-phosphocreatine to initiate a futile cycle of creatine dephosphorylation and phosphorylation. During the futile creatine cycle, creatine and N-phosphocreatine are in a futile cycle, which dissipates the high energy charge of N-phosphocreatine as heat without performing any mechanical or chemical work. The chain is Alkaline phosphatase, tissue-nonspecific isozyme (Alpl) from Rattus norvegicus (Rat).